Consider the following 126-residue polypeptide: Sperm-specific H1/protamine-like protein type 2 (126 aa).

Residues 5-84 (KKPTTLSMIV…GATGSFRVGK (80 aa)) form the H15 domain. The disordered stretch occupies residues 74–126 (SGATGSFRVGKAPASPKKAKKAKSPKKKSSKKSKNKSNNAKAKKSPKKKADSN). Basic residues predominate over residues 90-120 (KKAKKAKSPKKKSSKKSKNKSNNAKAKKSPK).

In terms of processing, OE2 and OE3 are produced by post-translational cleavage of a common precursor. Sperm.

It is found in the nucleus. The protein localises to the chromosome. In terms of biological role, linker histones are implicated in chromatin remodeling and/or transcriptional regulation during spermiogenesis, the process of spermatid maturation into spermatozoa. Protamines substitute for histones in the chromatin of sperm during the haploid phase of spermatogenesis. They compact sperm DNA into a highly condensed, stable and inactive complex. The polypeptide is Sperm-specific H1/protamine-like protein type 2 (Ostrea edulis (Native oyster)).